Consider the following 203-residue polypeptide: Probable GTP-binding protein EngB (203 aa).

Residues 24-199 (DGSEVAFAGR…HTVIETWLGL (176 aa)) form the EngB-type G domain. Residues 32–39 (GRSNAGKS), 59–63 (GRTQQ), 77–80 (DLPG), 144–147 (TKAD), and 178–180 (FSS) each bind GTP. The Mg(2+) site is built by Ser39 and Thr61.

The protein belongs to the TRAFAC class TrmE-Era-EngA-EngB-Septin-like GTPase superfamily. EngB GTPase family. Mg(2+) is required as a cofactor.

In terms of biological role, necessary for normal cell division and for the maintenance of normal septation. The protein is Probable GTP-binding protein EngB of Xylella fastidiosa (strain 9a5c).